Reading from the N-terminus, the 476-residue chain is Eukaryotic translation initiation factor 3 subunit L (476 aa).

Residues 257 to 452 (DAIRMFSHIL…DLDYALEKDL (196 aa)) form the PCI domain.

The protein belongs to the eIF-3 subunit L family. Component of the eukaryotic translation initiation factor 3 (eIF-3) complex.

The protein localises to the cytoplasm. Its function is as follows. Component of the eukaryotic translation initiation factor 3 (eIF-3) complex, which is involved in protein synthesis of a specialized repertoire of mRNAs and, together with other initiation factors, stimulates binding of mRNA and methionyl-tRNAi to the 40S ribosome. The eIF-3 complex specifically targets and initiates translation of a subset of mRNAs involved in cell proliferation. This Aspergillus terreus (strain NIH 2624 / FGSC A1156) protein is Eukaryotic translation initiation factor 3 subunit L.